Reading from the N-terminus, the 821-residue chain is Phenylalanine--tRNA ligase beta subunit (821 aa).

One can recognise a tRNA-binding domain in the interval 39 to 149 (SENVKGIVLG…EDIALNHNLG (111 aa)). Residues 414 to 507 (LKKILIPLRR…RLIGYDMFDL (94 aa)) form the B5 domain. Mg(2+) is bound by residues Asp-485, Asp-491, Glu-494, and Glu-495. Positions 727-820 (PTVPKMERDI…IEKKFSTKLR (94 aa)) constitute an FDX-ACB domain.

This sequence belongs to the phenylalanyl-tRNA synthetase beta subunit family. Type 1 subfamily. As to quaternary structure, tetramer of two alpha and two beta subunits. Mg(2+) is required as a cofactor.

It is found in the cytoplasm. The catalysed reaction is tRNA(Phe) + L-phenylalanine + ATP = L-phenylalanyl-tRNA(Phe) + AMP + diphosphate + H(+). This Prochlorococcus marinus subsp. pastoris (strain CCMP1986 / NIES-2087 / MED4) protein is Phenylalanine--tRNA ligase beta subunit.